Reading from the N-terminus, the 417-residue chain is Divinyl chlorophyllide a 8-vinyl-reductase, chloroplastic (417 aa).

The N-terminal 49 residues, Met-1–Ser-49, are a transit peptide targeting the chloroplast.

As to expression, highly expressed in leaves, stems and flower buds. Detected in roots.

It is found in the plastid. The protein localises to the chloroplast. The catalysed reaction is protochlorophyllide a + NADP(+) = 3,8-divinyl protochlorophyllide a + NADPH + H(+). It participates in porphyrin-containing compound metabolism; chlorophyll biosynthesis. In terms of biological role, catalyzes the conversion of divinyl chlorophyllide to monovinyl chlorophyllide. Reduces the 8-vinyl group of the tetrapyrrole to an ethyl group using NADPH as the reductant. The best substrate is (3,8-divinyl)-chlorophyllide a (DV-Chlidea). Very low activity with (3,8-divinyl)-protochlorophyllide a (DV-Pchlidea) and (3,8-divinyl)-magnesium-protoporphyrin IX monomethyl ester (DV-MPE). No activity with (3,8-divinyl)-chlorophyllide b (DV-Chlideb), (3,8-divinyl)-magnesium-protoporphyrin IX (DV-Mg-Proto) and either (3,8-divinyl)-chlorophyll a (DV-Chla) or b (DV-Chlb). The sequence is that of Divinyl chlorophyllide a 8-vinyl-reductase, chloroplastic (DVR) from Arabidopsis thaliana (Mouse-ear cress).